The following is a 229-amino-acid chain: 2-C-methyl-D-erythritol 4-phosphate cytidylyltransferase (229 aa).

The protein belongs to the IspD/TarI cytidylyltransferase family. IspD subfamily.

It carries out the reaction 2-C-methyl-D-erythritol 4-phosphate + CTP + H(+) = 4-CDP-2-C-methyl-D-erythritol + diphosphate. The protein operates within isoprenoid biosynthesis; isopentenyl diphosphate biosynthesis via DXP pathway; isopentenyl diphosphate from 1-deoxy-D-xylulose 5-phosphate: step 2/6. In terms of biological role, catalyzes the formation of 4-diphosphocytidyl-2-C-methyl-D-erythritol from CTP and 2-C-methyl-D-erythritol 4-phosphate (MEP). The polypeptide is 2-C-methyl-D-erythritol 4-phosphate cytidylyltransferase (Clostridium botulinum (strain Okra / Type B1)).